A 90-amino-acid polypeptide reads, in one-letter code: MAFFGKRKEKRKFTQQNPLFKRRKFCRFTAAGVEEIDYKDLDTLRDFVQENGKIIPARLTGTRAIYQRQLDSAIKRARFLALLPYTDNHN.

This sequence belongs to the bacterial ribosomal protein bS18 family. Part of the 30S ribosomal subunit. Forms a tight heterodimer with protein bS6.

In terms of biological role, binds as a heterodimer with protein bS6 to the central domain of the 16S rRNA, where it helps stabilize the platform of the 30S subunit. In Bordetella avium (strain 197N), this protein is Small ribosomal subunit protein bS18.